Reading from the N-terminus, the 277-residue chain is Shikimate dehydrogenase (NADP(+)) (277 aa).

Shikimate contacts are provided by residues 15–17 (SLS) and Thr-62. Lys-66 acts as the Proton acceptor in catalysis. Shikimate-binding residues include Asn-87 and Asp-102. NADP(+) contacts are provided by residues 127 to 131 (GAGGA), 151 to 156 (NRTVDK), and Ile-219. Residue Tyr-221 participates in shikimate binding. Residue Gly-242 participates in NADP(+) binding.

This sequence belongs to the shikimate dehydrogenase family. Homodimer.

It catalyses the reaction shikimate + NADP(+) = 3-dehydroshikimate + NADPH + H(+). It functions in the pathway metabolic intermediate biosynthesis; chorismate biosynthesis; chorismate from D-erythrose 4-phosphate and phosphoenolpyruvate: step 4/7. Involved in the biosynthesis of the chorismate, which leads to the biosynthesis of aromatic amino acids. Catalyzes the reversible NADPH linked reduction of 3-dehydroshikimate (DHSA) to yield shikimate (SA). The polypeptide is Shikimate dehydrogenase (NADP(+)) (Bacillus cereus (strain AH187)).